Here is a 224-residue protein sequence, read N- to C-terminus: Ribose-5-phosphate isomerase A (224 aa).

Substrate contacts are provided by residues 26–29 (TGST), 82–85 (DGAD), and 95–98 (KGGG). The Proton acceptor role is filled by Glu104. A substrate-binding site is contributed by Lys122.

This sequence belongs to the ribose 5-phosphate isomerase family. As to quaternary structure, homodimer.

It catalyses the reaction aldehydo-D-ribose 5-phosphate = D-ribulose 5-phosphate. The protein operates within carbohydrate degradation; pentose phosphate pathway; D-ribose 5-phosphate from D-ribulose 5-phosphate (non-oxidative stage): step 1/1. Functionally, catalyzes the reversible conversion of ribose-5-phosphate to ribulose 5-phosphate. This Streptococcus suis (strain 98HAH33) protein is Ribose-5-phosphate isomerase A.